We begin with the raw amino-acid sequence, 247 residues long: TLC domain-containing protein 1 (247 aa).

An N-terminal signal peptide occupies residues 1–27 (MPLLFHPAWPLLLGATLTFRALRRVLC). Residues 28-46 (RLPQPAHVQTDPLRTWRWH) are Extracellular-facing. Residues 40-234 (LRTWRWHNLL…LLRSDFCPER (195 aa)) form the TLC domain. Residues 47 to 67 (NLLVSFTHSIVSGIWALLCLW) traverse the membrane as a helical segment. Residues 68 to 83 (QTPEMLVEIETAWSAS) are Cytoplasmic-facing. The chain crosses the membrane as a helical span at residues 84-104 (GYLLVCFSAGYFIHDTVDIVV). Over 105–123 (SKQTRASWEYLVHHVMAMG) the chain is Extracellular. Positions 124 to 144 (AFFSGIFWKRFVGGGVLTLLV) form an intramembrane region, helical. The Extracellular segment spans residues 145-173 (EVSNIFLTLRMMMKINNAQDLLLYKVNKY). The helical transmembrane segment at 174–194 (INLVMYFLFRLAPQAYLTKFF) threads the bilayer. Over 195–201 (LQYAGQR) the chain is Cytoplasmic. Residues 202-222 (TLGTFLLAILLMLDLMIIIYF) form a helical membrane-spanning segment. Topologically, residues 223-247 (SRLLRSDFCPERAPRRQQKDKFLTE) are extracellular.

The protein localises to the cell membrane. Regulates the composition and fluidity of the plasma membrane. Inhibits the incorporation of membrane-fluidizing phospholipids containing omega-3 long-chain polyunsaturated fatty acids (LCPUFA) and thereby promotes membrane rigidity. Does not appear to have any effect on LCPUFA synthesis. The chain is TLC domain-containing protein 1 (Tlcd1) from Mus musculus (Mouse).